Here is a 365-residue protein sequence, read N- to C-terminus: Phosphatidylcholine:ceramide cholinephosphotransferase 4 (365 aa).

Topologically, residues 1–44 are cytoplasmic; that stretch reads MISYPFFSLSPPGLVPPPMAVPPVEMYSGSFWNRMRKPLPLRTQ. A helical transmembrane segment spans residues 45–65; it reads VIRFTVVFVIVSFILAVALQI. At 66 to 92 the chain is on the lumenal side; that stretch reads THERMPDPKVTKPLPDLGFELLTKVPG. The chain crosses the membrane as a helical span at residues 93–113; it reads MYVLADCCIGFLNILSVFTAF. Over 114–165 the chain is Cytoplasmic; sequence KLYLLHRHCVGSGEPELPCNIPGVSRFFLSVWLCKENCRIELRNVHTIAWIR. Residues 166–186 form a helical membrane-spanning segment; that stretch reads FITSYALLLLFRSVVIVMTSL. The Lumenal portion of the chain corresponds to 187–229; that stretch reads PAPDDLCQDPPKIENPVKNVILTVLTAGGGSIHCGDLMYSGHT. Residue His-228 is part of the active site. Residues 230-250 traverse the membrane as a helical segment; sequence VILTLHLMFHWIYGAMVHWSF. Residue Arg-251 is a topological domain, cytoplasmic. The chain crosses the membrane as a helical span at residues 252 to 272; sequence PVVTVVAIFGYYCIVASRFHY. Catalysis depends on residues His-271 and Asp-275. Residues 273 to 275 are Lumenal-facing; it reads TDD. A helical transmembrane segment spans residues 276–296; it reads VLVAIYLTIATFIAVGHNADG. At 297 to 365 the chain is on the cytoplasmic side; sequence APWQLQLFIR…ALMFKCGAYV (69 aa).

It belongs to the sphingomyelin synthase family.

It is found in the golgi apparatus membrane. The enzyme catalyses an N-acylsphing-4-enine + a 1,2-diacyl-sn-glycero-3-phosphocholine = a sphingomyelin + a 1,2-diacyl-sn-glycerol. Its function is as follows. Bidirectional lipid cholinephosphotransferase capable of converting phosphatidylcholine (PC) and ceramide to sphingomyelin (SM) and diacylglycerol (DAG) and vice versa. Direction is dependent on the relative concentrations of DAG and ceramide as phosphocholine acceptors. Directly and specifically recognizes the choline head group on the substrate. Also requires two fatty chains on the choline-P donor molecule in order to be recognized efficiently as a substrate. Does not function strictly as a SM synthase. Essential for viability of the pathogenic bloodstream stage of this human protozoan parasite and, consequently, can be considered as potential drug target. The chain is Phosphatidylcholine:ceramide cholinephosphotransferase 4 from Trypanosoma brucei brucei (strain 927/4 GUTat10.1).